A 351-amino-acid chain; its full sequence is Ferrochelatase (351 aa).

Positions 184 and 265 each coordinate Fe cation.

The protein belongs to the ferrochelatase family.

Its subcellular location is the cytoplasm. It catalyses the reaction heme b + 2 H(+) = protoporphyrin IX + Fe(2+). It functions in the pathway porphyrin-containing compound metabolism; protoheme biosynthesis; protoheme from protoporphyrin-IX: step 1/1. Its function is as follows. Catalyzes the ferrous insertion into protoporphyrin IX. In Rhodopirellula baltica (strain DSM 10527 / NCIMB 13988 / SH1), this protein is Ferrochelatase.